Consider the following 217-residue polypeptide: 3,4-dihydroxy-2-butanone 4-phosphate synthase (217 aa).

Residues 37-38 (RE), aspartate 42, 150-154 (RGGHT), and glutamate 174 contribute to the D-ribulose 5-phosphate site. Position 38 (glutamate 38) interacts with Mg(2+). Histidine 153 serves as a coordination point for Mg(2+).

It belongs to the DHBP synthase family. Homodimer. It depends on Mg(2+) as a cofactor. The cofactor is Mn(2+).

The catalysed reaction is D-ribulose 5-phosphate = (2S)-2-hydroxy-3-oxobutyl phosphate + formate + H(+). The protein operates within cofactor biosynthesis; riboflavin biosynthesis; 2-hydroxy-3-oxobutyl phosphate from D-ribulose 5-phosphate: step 1/1. In terms of biological role, catalyzes the conversion of D-ribulose 5-phosphate to formate and 3,4-dihydroxy-2-butanone 4-phosphate. The chain is 3,4-dihydroxy-2-butanone 4-phosphate synthase from Klebsiella pneumoniae subsp. pneumoniae (strain ATCC 700721 / MGH 78578).